The following is a 164-amino-acid chain: FMN reductase (NADH) RutF (164 aa).

The protein belongs to the non-flavoprotein flavin reductase family. RutF subfamily.

The catalysed reaction is FMNH2 + NAD(+) = FMN + NADH + 2 H(+). Its function is as follows. Catalyzes the reduction of FMN to FMNH2 which is used to reduce pyrimidine by RutA via the Rut pathway. The sequence is that of FMN reductase (NADH) RutF from Escherichia coli O150:H5 (strain SE15).